The sequence spans 239 residues: Insulin-like growth factor-binding protein 3 receptor (239 aa).

Positions 1–38 (MGSCQAGHYLHFCLAHHPPLVCATLILLLLGLSGLGLG) are cleaved as a signal peptide. The Extracellular portion of the chain corresponds to 39-205 (GFLLTHRTDL…EELTLCGSRL (167 aa)). N-linked (GlcNAc...) asparagine glycans are attached at residues N101 and N167. Residues 206-226 (LVLGFFLILFCGLCCLTAACF) form a helical membrane-spanning segment. Residues 227 to 239 (HPRRESHWSRTRL) are Cytoplasmic-facing.

In terms of assembly, interacts with IGFBP3. Interacts with CASP8.

Its subcellular location is the cell membrane. In terms of biological role, cell death receptor specific for IGFBP3, may mediate caspase-8-dependent apoptosis upon ligand binding. The chain is Insulin-like growth factor-binding protein 3 receptor (TMEM219) from Bos taurus (Bovine).